Here is a 155-residue protein sequence, read N- to C-terminus: F-box only protein 48 (155 aa).

The disordered stretch occupies residues 1 to 27 (MHKNSKRNNNLRVSHTEANSVDAEKEK). Residues 7 to 19 (RNNNLRVSHTEAN) are compositionally biased toward polar residues. One can recognise an F-box domain in the interval 32-79 (NNFFELLPAEITFKIFSQLDIRSLCRASLTCRSWNDTIRNSDSLWKPH).

This chain is F-box only protein 48 (FBXO48), found in Homo sapiens (Human).